A 392-amino-acid polypeptide reads, in one-letter code: Alanine racemase 2 (392 aa).

Catalysis depends on lysine 40, which acts as the Proton acceptor; specific for D-alanine. The residue at position 40 (lysine 40) is an N6-(pyridoxal phosphate)lysine. A substrate-binding site is contributed by arginine 138. Tyrosine 266 serves as the catalytic Proton acceptor; specific for L-alanine. A substrate-binding site is contributed by methionine 314.

This sequence belongs to the alanine racemase family. Pyridoxal 5'-phosphate serves as cofactor.

It catalyses the reaction L-alanine = D-alanine. The protein operates within amino-acid biosynthesis; D-alanine biosynthesis; D-alanine from L-alanine: step 1/1. Functionally, catalyzes the interconversion of L-alanine and D-alanine. May also act on other amino acids. The chain is Alanine racemase 2 (alr2) from Oceanobacillus iheyensis (strain DSM 14371 / CIP 107618 / JCM 11309 / KCTC 3954 / HTE831).